Reading from the N-terminus, the 397-residue chain is Metallophosphoesterase 1 (397 aa).

Residues 27-47 (IAVVFAVLLFCEFLIYYLAIF) traverse the membrane as a helical segment. A divalent metal cation is bound by residues Asp77, Asp119, Asn157, His250, His304, and His306. The helical transmembrane segment at 357–377 (VVLIIYCGMVGFLVVLTLTHF) threads the bilayer. A Di-lysine motif motif is present at residues 393–397 (KRKTR).

Belongs to the metallophosphoesterase superfamily. MPPE1 family. As to quaternary structure, interacts with GPI-anchor proteins (via the GPI portion). Interacts with TMED10. It depends on Mn(2+) as a cofactor.

The protein resides in the endoplasmic reticulum-Golgi intermediate compartment membrane. Functionally, metallophosphoesterase that catalyzes the removal of a side-chain ethanolamine-phosphate (EtNP) from the second mannose of the GPI-anchor protein intermediate. Participates in the glycan remodeling steps of GPI-anchor maturation to allow an efficient transport of GPI-anchor proteins from the endoplasmic reticulum to the Golgi. The polypeptide is Metallophosphoesterase 1 (Pongo abelii (Sumatran orangutan)).